The sequence spans 202 residues: FMN-dependent NADH:quinone oxidoreductase (202 aa).

FMN-binding positions include Ser-9 and 95–98 (MYNF).

It belongs to the azoreductase type 1 family. Homodimer. It depends on FMN as a cofactor.

The enzyme catalyses 2 a quinone + NADH + H(+) = 2 a 1,4-benzosemiquinone + NAD(+). The catalysed reaction is N,N-dimethyl-1,4-phenylenediamine + anthranilate + 2 NAD(+) = 2-(4-dimethylaminophenyl)diazenylbenzoate + 2 NADH + 2 H(+). Quinone reductase that provides resistance to thiol-specific stress caused by electrophilic quinones. In terms of biological role, also exhibits azoreductase activity. Catalyzes the reductive cleavage of the azo bond in aromatic azo compounds to the corresponding amines. This chain is FMN-dependent NADH:quinone oxidoreductase, found in Chromobacterium violaceum (strain ATCC 12472 / DSM 30191 / JCM 1249 / CCUG 213 / NBRC 12614 / NCIMB 9131 / NCTC 9757 / MK).